The following is a 202-amino-acid chain: NADH-quinone oxidoreductase subunit C (202 aa).

Belongs to the complex I 30 kDa subunit family. As to quaternary structure, NDH-1 is composed of 14 different subunits. Subunits NuoB, C, D, E, F, and G constitute the peripheral sector of the complex.

The protein resides in the cell inner membrane. The catalysed reaction is a quinone + NADH + 5 H(+)(in) = a quinol + NAD(+) + 4 H(+)(out). Its function is as follows. NDH-1 shuttles electrons from NADH, via FMN and iron-sulfur (Fe-S) centers, to quinones in the respiratory chain. The immediate electron acceptor for the enzyme in this species is believed to be ubiquinone. Couples the redox reaction to proton translocation (for every two electrons transferred, four hydrogen ions are translocated across the cytoplasmic membrane), and thus conserves the redox energy in a proton gradient. This Albidiferax ferrireducens (strain ATCC BAA-621 / DSM 15236 / T118) (Rhodoferax ferrireducens) protein is NADH-quinone oxidoreductase subunit C.